The chain runs to 176 residues: KxDL motif-containing protein 1 (176 aa).

Methionine 1 is modified (N-acetylmethionine). The disordered stretch occupies residues 95-176 (HPEAFSHIPE…HTDDEEMPGE (82 aa)). The segment covering 119–131 (STTTTIATSEQST) has biased composition (low complexity). Residues 132–145 (GSCDTSPDTVSPSL) show a composition bias toward polar residues.

This sequence belongs to the KXD1 family. In terms of assembly, component of the BLOC-one-related complex (BORC) which is composed of BLOC1S1, BLOC1S2, BORCS5, BORCS6, BORCS7, BORCS8, KXD1 and SNAPIN. Associates with the BLOC-1 complex. Interacts with BLOC1S1. Interacts with DTNBP1/BLOC1S7 (via coiled-coil domain).

The protein localises to the lysosome membrane. In terms of biological role, as part of the BORC complex may play a role in lysosomes movement and localization at the cell periphery. Associated with the cytosolic face of lysosomes, the BORC complex may recruit ARL8B and couple lysosomes to microtubule plus-end-directed kinesin motor. May also be involved in the biogenesis of lysosome-related organelles such as melanosomes. The sequence is that of KxDL motif-containing protein 1 (KXD1) from Bos taurus (Bovine).